The primary structure comprises 67 residues: Large ribosomal subunit protein bL35 (67 aa).

Belongs to the bacterial ribosomal protein bL35 family.

The chain is Large ribosomal subunit protein bL35 from Caldanaerobacter subterraneus subsp. tengcongensis (strain DSM 15242 / JCM 11007 / NBRC 100824 / MB4) (Thermoanaerobacter tengcongensis).